We begin with the raw amino-acid sequence, 967 residues long: Probable helicase DDB_G0274399 (967 aa).

The disordered stretch occupies residues 161–192; sequence EMTDDEDTAPTSAATHVGAPTKSTTTTTTTTT. 357–364 provides a ligand contact to ATP; sequence GPPGTGKT. Disordered regions lie at residues 529–553 and 892–967; these read SAIP…QDTS and QKQK…RTRR. Positions 890-949 form a coiled coil; that stretch reads NLQKQKDIEKRKKQHKRQKQKSKENDKKKQLKKRKELNNNDNNNNNKESSNKEVQEITNA. Over residues 900-909 the composition is skewed to basic residues; that stretch reads RKKQHKRQKQ. Over residues 928–937 the composition is skewed to low complexity; sequence NNDNNNNNKE.

It belongs to the DNA2/NAM7 helicase family.

Its subcellular location is the nucleus. The protein is Probable helicase DDB_G0274399 of Dictyostelium discoideum (Social amoeba).